Here is a 570-residue protein sequence, read N- to C-terminus: Hydroxylamine reductase (570 aa).

The [4Fe-4S] cluster site is built by Cys5, Cys8, Cys17, and Cys23. 8 residues coordinate hybrid [4Fe-2O-2S] cluster: His266, Glu290, Cys334, Cys425, Cys453, Cys478, Glu513, and Lys515. Cys425 carries the post-translational modification Cysteine persulfide.

Belongs to the HCP family. Requires [4Fe-4S] cluster as cofactor. Hybrid [4Fe-2O-2S] cluster is required as a cofactor.

The protein localises to the cytoplasm. It carries out the reaction A + NH4(+) + H2O = hydroxylamine + AH2 + H(+). In terms of biological role, catalyzes the reduction of hydroxylamine to form NH(3) and H(2)O. The sequence is that of Hydroxylamine reductase from Clostridium botulinum (strain Langeland / NCTC 10281 / Type F).